The primary structure comprises 326 residues: Ribosomal large subunit pseudouridine synthase D (326 aa).

The region spanning Gln-18–Glu-91 is the S4 RNA-binding domain. Asp-139 is an active-site residue.

It belongs to the pseudouridine synthase RluA family.

Its subcellular location is the cytoplasm. It catalyses the reaction uridine(1911/1915/1917) in 23S rRNA = pseudouridine(1911/1915/1917) in 23S rRNA. Functionally, responsible for synthesis of pseudouridine from uracil at positions 1911, 1915 and 1917 in 23S ribosomal RNA. This Escherichia coli O157:H7 protein is Ribosomal large subunit pseudouridine synthase D (rluD).